The primary structure comprises 1199 residues: AP-3 complex subunit delta-1 (1199 aa).

Position 2 is an N-acetylalanine (A2). 9 HEAT repeats span residues 34–71 (KYIS…LGYD), 142–179 (DLAR…KYPE), 180–216 (SLRP…RNPK), 218–254 (YLSL…LEPR), 257–296 (KKLI…GMPN), 298–336 (SASI…THPK), 337–373 (SVQS…KKNL), 375–409 (EIVK…QSNY), and 521–558 (VYVQ…ERLP). 2 disordered regions span residues 623 to 695 (LDAW…RYQD) and 724 to 963 (YVKL…EPIP). Phosphoserine occurs at positions 632, 634, and 636. Basic and acidic residues-rich tracts occupy residues 639–651 (EKPK…EEPR) and 665–675 (LARRREARKQE). Residues 659–679 (EEDEEELARRREARKQEQANN) adopt a coiled-coil conformation. S688 carries the post-translational modification Phosphoserine. Positions 722 to 750 (DQYVKLEEQRRHRQRLEKDKKRKKKEKGK) form a coiled coil. The segment covering 732–754 (RHRQRLEKDKKRKKKEKGKRRHS) has biased composition (basic residues). Residues S754 and S755 each carry the phosphoserine modification. The residue at position 758 (T758) is a Phosphothreonine. Phosphoserine occurs at positions 760, 784, and 825. Residues 773–790 (ITEEMPENALPSDEDDKD) are compositionally biased toward acidic residues. Over residues 791–836 (PNDPYRALDIDLDKPLADSEKLPVQKHRNAEAVKSPEKEGVLGVEK) the composition is skewed to basic and acidic residues. Residues 837–846 (KSKKPKKKEK) show a composition bias toward basic residues. Residues 843–863 (KKEKKTKEREREKKDKKGEDL) are a coiled coil. A compositionally biased stretch (basic and acidic residues) spans 847–862 (KTKEREREKKDKKGED). A compositionally biased stretch (pro residues) spans 870–880 (TPPPAAAPIPA). Residues 894–916 (PKDECEVLKGEEEDHVDHDQERK) show a composition bias toward basic and acidic residues. The stretch at 911-934 (HDQERKSSRHKKKKHRKEKEKEER) forms a coiled coil. A compositionally biased stretch (basic residues) spans 917-928 (SSRHKKKKHRKE).

This sequence belongs to the adaptor complexes large subunit family. In terms of assembly, adaptor protein complex 3 (AP-3) is a heterotetramer composed of two large adaptins (delta-type subunit AP3D1 and beta-type subunit AP3B1 or AP3B2), a medium adaptin (mu-type subunit AP3M1 or AP3M2) and a small adaptin (sigma-type subunit APS1 or AP3S2). AP-3 associates with the BLOC-1 complex. Interacts with SLC30A2. Interacts with CLN3 (via dileucine motif); this interaction facilitates lysosomal targeting.

The protein resides in the cytoplasm. The protein localises to the golgi apparatus membrane. Its function is as follows. Part of the AP-3 complex, an adaptor-related complex which is not clathrin-associated. The complex is associated with the Golgi region as well as more peripheral structures. It facilitates the budding of vesicles from the Golgi membrane and may be directly involved in trafficking to lysosomes. Involved in process of CD8+ T-cell and NK cell degranulation. In concert with the BLOC-1 complex, AP-3 is required to target cargos into vesicles assembled at cell bodies for delivery into neurites and nerve terminals. The protein is AP-3 complex subunit delta-1 (Ap3d1) of Mus musculus (Mouse).